Reading from the N-terminus, the 472-residue chain is Pyruvate kinase (472 aa).

Arg33 serves as a coordination point for substrate. The K(+) site is built by Asn35, Ser37, and Asp67. An ATP-binding site is contributed by 35 to 38 (NFSH). The ATP site is built by Arg74 and Lys155. Glu220 serves as a coordination point for Mg(2+). The substrate site is built by Gly243, Asp244, and Thr276. Residue Asp244 participates in Mg(2+) binding.

It belongs to the pyruvate kinase family. As to quaternary structure, homotetramer. Mg(2+) is required as a cofactor. The cofactor is K(+).

It carries out the reaction pyruvate + ATP = phosphoenolpyruvate + ADP + H(+). It participates in carbohydrate degradation; glycolysis; pyruvate from D-glyceraldehyde 3-phosphate: step 5/5. The sequence is that of Pyruvate kinase (pyk) from Mycobacterium intracellulare.